Here is a 478-residue protein sequence, read N- to C-terminus: Ketoisovalerate oxidoreductase subunit VorA (478 aa).

In terms of assembly, heterotrimer of the VorA, VorB and VorC subunits.

The protein is Ketoisovalerate oxidoreductase subunit VorA (vorA) of Methanothermobacter marburgensis (strain ATCC BAA-927 / DSM 2133 / JCM 14651 / NBRC 100331 / OCM 82 / Marburg) (Methanobacterium thermoautotrophicum).